A 35-amino-acid chain; its full sequence is U1-theraphotoxin-Hs1f (35 aa).

Cystine bridges form between C3–C16, C7–C27, and C21–C32.

Belongs to the neurotoxin 12 (Hwtx-2) family. 02 (Hwtx-2) subfamily. In terms of tissue distribution, expressed by the venom gland.

The protein localises to the secreted. Functionally, blocks neuromuscular transmission. Acts cooperatively to potentiate the activity of huwentoxin-I. Paralyzes locusts and kills mice following intracerebroventricular injection. In Cyriopagopus schmidti (Chinese bird spider), this protein is U1-theraphotoxin-Hs1f.